The sequence spans 172 residues: 3-hydroxydecanoyl-[acyl-carrier-protein] dehydratase (172 aa).

H71 is an active-site residue.

It belongs to the thioester dehydratase family. FabA subfamily. In terms of assembly, homodimer.

The protein resides in the cytoplasm. It carries out the reaction a (3R)-hydroxyacyl-[ACP] = a (2E)-enoyl-[ACP] + H2O. The catalysed reaction is (3R)-hydroxydecanoyl-[ACP] = (2E)-decenoyl-[ACP] + H2O. The enzyme catalyses (2E)-decenoyl-[ACP] = (3Z)-decenoyl-[ACP]. The protein operates within lipid metabolism; fatty acid biosynthesis. Functionally, necessary for the introduction of cis unsaturation into fatty acids. Catalyzes the dehydration of (3R)-3-hydroxydecanoyl-ACP to E-(2)-decenoyl-ACP and then its isomerization to Z-(3)-decenoyl-ACP. Can catalyze the dehydratase reaction for beta-hydroxyacyl-ACPs with saturated chain lengths up to 16:0, being most active on intermediate chain length. The protein is 3-hydroxydecanoyl-[acyl-carrier-protein] dehydratase of Blochmanniella floridana.